The sequence spans 727 residues: Procollagen-lysine,2-oxoglutarate 5-dioxygenase 1 (727 aa).

Residues 1 to 18 form the signal peptide; the sequence is MRPLLLLAPLGWLLLAEA. Residues N163, N197, and N538 are each glycosylated (N-linked (GlcNAc...) asparagine). The Fe2OG dioxygenase domain occupies 636–727; it reads QFDLAFVVRY…RYIAVSFVDP (92 aa). Positions 656 and 658 each coordinate Fe cation. N686 carries an N-linked (GlcNAc...) asparagine glycan. Residue H708 coordinates Fe cation. The active site involves R718.

As to quaternary structure, homodimer. Identified in a complex with P3H3 and P3H4. Fe(2+) is required as a cofactor. Requires L-ascorbate as cofactor.

Its subcellular location is the rough endoplasmic reticulum membrane. It catalyses the reaction L-lysyl-[collagen] + 2-oxoglutarate + O2 = (5R)-5-hydroxy-L-lysyl-[collagen] + succinate + CO2. Its function is as follows. Part of a complex composed of PLOD1, P3H3 and P3H4 that catalyzes hydroxylation of lysine residues in collagen alpha chains and is required for normal assembly and cross-linkling of collagen fibrils. Forms hydroxylysine residues in -Xaa-Lys-Gly- sequences in collagens. These hydroxylysines serve as sites of attachment for carbohydrate units and are essential for the stability of the intermolecular collagen cross-links. The sequence is that of Procollagen-lysine,2-oxoglutarate 5-dioxygenase 1 (PLOD1) from Pongo abelii (Sumatran orangutan).